Reading from the N-terminus, the 237-residue chain is Large ribosomal subunit protein uL1 (237 aa).

Belongs to the universal ribosomal protein uL1 family. Part of the 50S ribosomal subunit.

Functionally, binds directly to 23S rRNA. The L1 stalk is quite mobile in the ribosome, and is involved in E site tRNA release. Protein L1 is also a translational repressor protein, it controls the translation of the L11 operon by binding to its mRNA. The protein is Large ribosomal subunit protein uL1 of Dehalococcoides mccartyi (strain ATCC BAA-2266 / KCTC 15142 / 195) (Dehalococcoides ethenogenes (strain 195)).